The chain runs to 250 residues: N-acyl homoserine lactonase (250 aa).

Zn(2+) is bound by residues His-104, His-106, Asp-108, His-109, His-169, Asp-191, and His-235.

It belongs to the metallo-beta-lactamase superfamily. In terms of assembly, monomer. Zn(2+) serves as cofactor.

It carries out the reaction an N-acyl-L-homoserine lactone + H2O = an N-acyl-L-homoserine + H(+). Its function is as follows. Catalyzes hydrolysis of N-hexanoyl-(S)-homoserine lactone, but not the R-enantiomer. Hydrolyzes short- and long-chain N-acyl homoserine lactones with or without 3-oxo substitution at C3, has maximum activity on C10-AHL. The polypeptide is N-acyl homoserine lactonase (Bacillus thuringiensis subsp. indiana).